We begin with the raw amino-acid sequence, 230 residues long: Leucyl/phenylalanyl-tRNA--protein transferase (230 aa).

Belongs to the L/F-transferase family.

Its subcellular location is the cytoplasm. It catalyses the reaction N-terminal L-lysyl-[protein] + L-leucyl-tRNA(Leu) = N-terminal L-leucyl-L-lysyl-[protein] + tRNA(Leu) + H(+). The catalysed reaction is N-terminal L-arginyl-[protein] + L-leucyl-tRNA(Leu) = N-terminal L-leucyl-L-arginyl-[protein] + tRNA(Leu) + H(+). It carries out the reaction L-phenylalanyl-tRNA(Phe) + an N-terminal L-alpha-aminoacyl-[protein] = an N-terminal L-phenylalanyl-L-alpha-aminoacyl-[protein] + tRNA(Phe). In terms of biological role, functions in the N-end rule pathway of protein degradation where it conjugates Leu, Phe and, less efficiently, Met from aminoacyl-tRNAs to the N-termini of proteins containing an N-terminal arginine or lysine. In Syntrophotalea carbinolica (strain DSM 2380 / NBRC 103641 / GraBd1) (Pelobacter carbinolicus), this protein is Leucyl/phenylalanyl-tRNA--protein transferase.